The chain runs to 270 residues: Phosphatidate cytidylyltransferase (270 aa).

7 consecutive transmembrane segments (helical) span residues 19–39, 53–73, 76–96, 101–121, 126–146, 183–203, and 248–268; these read LWLT…IGLA, TAFS…LLIL, GALL…VTQW, GWPA…SLLR, FGFT…IAAY, LVAS…ALLL, and ALLY…AIFF.

The protein belongs to the CDS family.

It localises to the cell inner membrane. The catalysed reaction is a 1,2-diacyl-sn-glycero-3-phosphate + CTP + H(+) = a CDP-1,2-diacyl-sn-glycerol + diphosphate. It participates in phospholipid metabolism; CDP-diacylglycerol biosynthesis; CDP-diacylglycerol from sn-glycerol 3-phosphate: step 3/3. The polypeptide is Phosphatidate cytidylyltransferase (cdsA) (Brucella melitensis biotype 1 (strain ATCC 23456 / CCUG 17765 / NCTC 10094 / 16M)).